The primary structure comprises 229 residues: MIRAIVTDIEGTTSDIRFVHNVLFPYARENLPSFIIGNQQQPAVAQALDQLRAEVERPEATVQELIDVLFGFMDEDRKSTALKALQGMVWRDGYLNGSFTGHLYPDVLPALRRWQQQGLALYVYSSGSVAAQKLLFGYSDAGDITGLFSGYFDTHMGAKREVDAYRNIASQIGLPAEQLLFLSDIHEELDAARDAGWHTVQLIRGAADNASRHRQVTDFDRINQELLNS.

It belongs to the HAD-like hydrolase superfamily. MasA/MtnC family. In terms of assembly, monomer. Mg(2+) is required as a cofactor.

The enzyme catalyses 5-methylsulfanyl-2,3-dioxopentyl phosphate + H2O = 1,2-dihydroxy-5-(methylsulfanyl)pent-1-en-3-one + phosphate. It participates in amino-acid biosynthesis; L-methionine biosynthesis via salvage pathway; L-methionine from S-methyl-5-thio-alpha-D-ribose 1-phosphate: step 3/6. The protein operates within amino-acid biosynthesis; L-methionine biosynthesis via salvage pathway; L-methionine from S-methyl-5-thio-alpha-D-ribose 1-phosphate: step 4/6. Its function is as follows. Bifunctional enzyme that catalyzes the enolization of 2,3-diketo-5-methylthiopentyl-1-phosphate (DK-MTP-1-P) into the intermediate 2-hydroxy-3-keto-5-methylthiopentenyl-1-phosphate (HK-MTPenyl-1-P), which is then dephosphorylated to form the acireductone 1,2-dihydroxy-3-keto-5-methylthiopentene (DHK-MTPene). This chain is Enolase-phosphatase E1, found in Erwinia tasmaniensis (strain DSM 17950 / CFBP 7177 / CIP 109463 / NCPPB 4357 / Et1/99).